Reading from the N-terminus, the 332-residue chain is Ketol-acid reductoisomerase (NADP(+)) (332 aa).

Residues 2–182 (ANIYYDEDAS…GATRAGLIET (181 aa)) form the KARI N-terminal Rossmann domain. Residues 25 to 28 (YGSQ), S51, S53, and 83 to 86 (DTVQ) each bind NADP(+). H108 is a catalytic residue. G134 contributes to the NADP(+) binding site. Positions 183–327 (TFKEETETDL…KELRKMMPWL (145 aa)) constitute a KARI C-terminal knotted domain. D191, E195, E227, and E231 together coordinate Mg(2+). S252 provides a ligand contact to substrate.

Belongs to the ketol-acid reductoisomerase family. It depends on Mg(2+) as a cofactor.

The enzyme catalyses (2R)-2,3-dihydroxy-3-methylbutanoate + NADP(+) = (2S)-2-acetolactate + NADPH + H(+). The catalysed reaction is (2R,3R)-2,3-dihydroxy-3-methylpentanoate + NADP(+) = (S)-2-ethyl-2-hydroxy-3-oxobutanoate + NADPH + H(+). It functions in the pathway amino-acid biosynthesis; L-isoleucine biosynthesis; L-isoleucine from 2-oxobutanoate: step 2/4. Its pathway is amino-acid biosynthesis; L-valine biosynthesis; L-valine from pyruvate: step 2/4. Its function is as follows. Involved in the biosynthesis of branched-chain amino acids (BCAA). Catalyzes an alkyl-migration followed by a ketol-acid reduction of (S)-2-acetolactate (S2AL) to yield (R)-2,3-dihydroxy-isovalerate. In the isomerase reaction, S2AL is rearranged via a Mg-dependent methyl migration to produce 3-hydroxy-3-methyl-2-ketobutyrate (HMKB). In the reductase reaction, this 2-ketoacid undergoes a metal-dependent reduction by NADPH to yield (R)-2,3-dihydroxy-isovalerate. In Sulfurihydrogenibium sp. (strain YO3AOP1), this protein is Ketol-acid reductoisomerase (NADP(+)).